The chain runs to 168 residues: Photosystem I assembly protein Ycf3 (168 aa).

TPR repeat units follow at residues 35–68 (AFTYYRDGMSAQSEGNYAEALQNYYEAMRLEIDP), 72–105 (SYILYNIGLIHTSNGEHTKALEYYFRALERNPFL), and 120–153 (GEQAIRQGDSEIAEAWFDQAAEYWKQAMALTPGN).

This sequence belongs to the Ycf3 family.

It is found in the plastid. Its subcellular location is the chloroplast thylakoid membrane. Functionally, essential for the assembly of the photosystem I (PSI) complex. May act as a chaperone-like factor to guide the assembly of the PSI subunits. The sequence is that of Photosystem I assembly protein Ycf3 from Panax ginseng (Korean ginseng).